We begin with the raw amino-acid sequence, 367 residues long: Probable glutamine synthetase (367 aa).

Positions isoleucine 30 to methionine 110 constitute a GS beta-grasp domain. The 251-residue stretch at histidine 117–phenylalanine 367 folds into the GS catalytic domain.

Belongs to the glutamine synthetase family. Homooctamer.

Its subcellular location is the cytoplasm. The enzyme catalyses L-glutamate + NH4(+) + ATP = L-glutamine + ADP + phosphate + H(+). The polypeptide is Probable glutamine synthetase (gln-2) (Caenorhabditis elegans).